Consider the following 1321-residue polypeptide: Lysine-specific demethylase 3A (1321 aa).

A phosphoserine mark is found at Ser-264 and Ser-325. Disordered regions lie at residues 307-336 (ATPP…IPQG), 383-402 (LTEP…QENR), and 438-472 (KHLE…GKKV). Polar residues predominate over residues 316–327 (QQSTPQAANSPP). Ser-445 is subject to Phosphoserine. The segment at 662 to 687 (CDVCDTTIFNLHWVCPRCGFGVCVDC) adopts a C6-type zinc-finger fold. Phosphoserine is present on Ser-766. The LXXLL motif motif lies at 885–889 (LRNLL). Lys-895 carries the N6-acetyllysine modification. One can recognise a JmjC domain in the interval 1058–1281 (MPSRFDDLMA…HCFWLTQEFR (224 aa)). The Fe cation site is built by His-1120, Asp-1122, and His-1249.

It belongs to the JHDM2 histone demethylase family. In terms of assembly, interacts with VRK1. Requires Fe(2+) as cofactor.

The protein resides in the cytoplasm. It localises to the nucleus. The catalysed reaction is N(6),N(6)-dimethyl-L-lysyl(9)-[histone H3] + 2 2-oxoglutarate + 2 O2 = L-lysyl(9)-[histone H3] + 2 formaldehyde + 2 succinate + 2 CO2. Its function is as follows. Histone demethylase that specifically demethylates 'Lys-9' of histone H3, thereby playing a central role in histone code. Preferentially demethylates mono- and dimethylated H3 'Lys-9' residue, with a preference for dimethylated residue, while it has weak or no activity on trimethylated H3 'Lys-9'. Demethylation of Lys residue generates formaldehyde and succinate. Involved in hormone-dependent transcriptional activation, by participating in recruitment to androgen-receptor target genes, resulting in H3 'Lys-9' demethylation and transcriptional activation. Involved in spermatogenesis by regulating expression of target genes such as PRM1 and TNP1 which are required for packaging and condensation of sperm chromatin. Involved in obesity resistance through regulation of metabolic genes such as PPARA and UCP1. The sequence is that of Lysine-specific demethylase 3A (KDM3A) from Homo sapiens (Human).